Here is a 126-residue protein sequence, read N- to C-terminus: Protein ApaG (126 aa).

Positions 2-126 (ADKLYQMEVQ…MTLVAPRVLH (125 aa)) constitute an ApaG domain.

This Chromobacterium violaceum (strain ATCC 12472 / DSM 30191 / JCM 1249 / CCUG 213 / NBRC 12614 / NCIMB 9131 / NCTC 9757 / MK) protein is Protein ApaG.